The chain runs to 262 residues: Acyl-[acyl-carrier-protein]--UDP-N-acetylglucosamine O-acyltransferase (262 aa).

Belongs to the transferase hexapeptide repeat family. LpxA subfamily. As to quaternary structure, homotrimer.

It localises to the cytoplasm. It carries out the reaction a (3R)-hydroxyacyl-[ACP] + UDP-N-acetyl-alpha-D-glucosamine = a UDP-3-O-[(3R)-3-hydroxyacyl]-N-acetyl-alpha-D-glucosamine + holo-[ACP]. The protein operates within glycolipid biosynthesis; lipid IV(A) biosynthesis; lipid IV(A) from (3R)-3-hydroxytetradecanoyl-[acyl-carrier-protein] and UDP-N-acetyl-alpha-D-glucosamine: step 1/6. Its function is as follows. Involved in the biosynthesis of lipid A, a phosphorylated glycolipid that anchors the lipopolysaccharide to the outer membrane of the cell. This chain is Acyl-[acyl-carrier-protein]--UDP-N-acetylglucosamine O-acyltransferase, found in Paracidovorax citrulli (strain AAC00-1) (Acidovorax citrulli).